The chain runs to 178 residues: ATP synthase subunit delta (178 aa).

Belongs to the ATPase delta chain family. F-type ATPases have 2 components, F(1) - the catalytic core - and F(0) - the membrane proton channel. F(1) has five subunits: alpha(3), beta(3), gamma(1), delta(1), epsilon(1). F(0) has three main subunits: a(1), b(2) and c(10-14). The alpha and beta chains form an alternating ring which encloses part of the gamma chain. F(1) is attached to F(0) by a central stalk formed by the gamma and epsilon chains, while a peripheral stalk is formed by the delta and b chains.

It localises to the cell inner membrane. Functionally, f(1)F(0) ATP synthase produces ATP from ADP in the presence of a proton or sodium gradient. F-type ATPases consist of two structural domains, F(1) containing the extramembraneous catalytic core and F(0) containing the membrane proton channel, linked together by a central stalk and a peripheral stalk. During catalysis, ATP synthesis in the catalytic domain of F(1) is coupled via a rotary mechanism of the central stalk subunits to proton translocation. Its function is as follows. This protein is part of the stalk that links CF(0) to CF(1). It either transmits conformational changes from CF(0) to CF(1) or is implicated in proton conduction. This Cellvibrio japonicus (strain Ueda107) (Pseudomonas fluorescens subsp. cellulosa) protein is ATP synthase subunit delta.